The following is a 215-amino-acid chain: Protein-L-isoaspartate O-methyltransferase (215 aa).

Residue S62 is part of the active site.

It belongs to the methyltransferase superfamily. L-isoaspartyl/D-aspartyl protein methyltransferase family.

The protein resides in the cytoplasm. It catalyses the reaction [protein]-L-isoaspartate + S-adenosyl-L-methionine = [protein]-L-isoaspartate alpha-methyl ester + S-adenosyl-L-homocysteine. In terms of biological role, catalyzes the methyl esterification of L-isoaspartyl residues in peptides and proteins that result from spontaneous decomposition of normal L-aspartyl and L-asparaginyl residues. It plays a role in the repair and/or degradation of damaged proteins. This chain is Protein-L-isoaspartate O-methyltransferase, found in Bradyrhizobium sp. (strain ORS 278).